Reading from the N-terminus, the 131-residue chain is Proline-rich protein 3 (131 aa).

The segment at 1–77 is disordered; that stretch reads LHRGPPGSRG…KEQRNPRRLK (77 aa). The span at 12–25 shows a compositional bias: pro residues; that stretch reads MIPPLLSLPPPPRG. The segment covering 28–44 has biased composition (gly residues); sequence PLRGGLGPRSGPYGRGW. Residues 98–126 form a C3H1-type zinc finger; sequence KSDRPVCRHFAKKGHCRYEDLCAFYHPGA.

This chain is Proline-rich protein 3 (PRR3), found in Sus scrofa (Pig).